The following is a 247-amino-acid chain: Coproheme decarboxylase (247 aa).

Residues arginine 129, 143–147 (YPMDK), histidine 170, glutamine 183, and serine 221 each bind Fe-coproporphyrin III. The active site involves tyrosine 143.

It belongs to the ChdC family. Type 1 subfamily. Requires Fe-coproporphyrin III as cofactor.

It carries out the reaction Fe-coproporphyrin III + 2 H2O2 + 2 H(+) = heme b + 2 CO2 + 4 H2O. The enzyme catalyses Fe-coproporphyrin III + H2O2 + H(+) = harderoheme III + CO2 + 2 H2O. The catalysed reaction is harderoheme III + H2O2 + H(+) = heme b + CO2 + 2 H2O. Its pathway is porphyrin-containing compound metabolism; protoheme biosynthesis. Functionally, involved in coproporphyrin-dependent heme b biosynthesis. Catalyzes the decarboxylation of Fe-coproporphyrin III (coproheme) to heme b (protoheme IX), the last step of the pathway. The reaction occurs in a stepwise manner with a three-propionate intermediate. This chain is Coproheme decarboxylase, found in Bacillus anthracis.